Consider the following 469-residue polypeptide: tRNA-2-methylthio-N(6)-dimethylallyladenosine synthase (469 aa).

Positions 22–142 constitute an MTTase N-terminal domain; it reads RKVFIKTYGC…LPEALRRAKE (121 aa). Residues C31, C67, C105, C183, C187, and C190 each contribute to the [4Fe-4S] cluster site. The 233-residue stretch at 169–401 folds into the Radical SAM core domain; sequence RARGVTAFLT…QALLLKQQQE (233 aa). The 63-residue stretch at 404–466 folds into the TRAM domain; that stretch reads ESCIGKEIDL…NNSLFAERAE (63 aa).

It belongs to the methylthiotransferase family. MiaB subfamily. In terms of assembly, monomer. Requires [4Fe-4S] cluster as cofactor.

The protein resides in the cytoplasm. It catalyses the reaction N(6)-dimethylallyladenosine(37) in tRNA + (sulfur carrier)-SH + AH2 + 2 S-adenosyl-L-methionine = 2-methylsulfanyl-N(6)-dimethylallyladenosine(37) in tRNA + (sulfur carrier)-H + 5'-deoxyadenosine + L-methionine + A + S-adenosyl-L-homocysteine + 2 H(+). Its function is as follows. Catalyzes the methylthiolation of N6-(dimethylallyl)adenosine (i(6)A), leading to the formation of 2-methylthio-N6-(dimethylallyl)adenosine (ms(2)i(6)A) at position 37 in tRNAs that read codons beginning with uridine. The polypeptide is tRNA-2-methylthio-N(6)-dimethylallyladenosine synthase (Rhizobium leguminosarum bv. trifolii (strain WSM2304)).